The chain runs to 218 residues: MDTNFWLERWQLGHTGFHQQEVLPLLQKHWHALDLPKESRVLVPLCGKTLDMHWLASQGHRVLGVELSPLAVTQFFDEAGLQPQRHTSAAGEHFIAGPIEIICGDAFALDASVLADCTAVYDRAALVALPAELRQRYLQTVYVQLPTHCRGLLITLEYPQAEKAGPPFSVDATHVHALFDAAWQVDQLERRDILDQEPRFRDEGVTGLSTAVYRLQRR.

4 residues coordinate S-adenosyl-L-methionine: tryptophan 10, leucine 45, glutamate 66, and arginine 123.

It belongs to the class I-like SAM-binding methyltransferase superfamily. TPMT family.

The protein localises to the cytoplasm. The catalysed reaction is S-adenosyl-L-methionine + a thiopurine = S-adenosyl-L-homocysteine + a thiopurine S-methylether.. The chain is Thiopurine S-methyltransferase from Xanthomonas axonopodis pv. citri (strain 306).